Reading from the N-terminus, the 434-residue chain is Probable transcription factor HMS1 (434 aa).

The bHLH domain maps to 266 to 341 (TGRVSHNIIE…TKSIEYICHL (76 aa)). The segment at 365–434 (HLTEPSQPLS…DMDFNNAGDF (70 aa)) is disordered. Composition is skewed to polar residues over residues 368 to 382 (EPSQ…SEQV) and 402 to 423 (PLHN…TNNS).

As to quaternary structure, interacts with the G1/S-specific cyclin PCL1. Post-translationally, phosphorylated by the cyclin-CDK complex PCL1-PHO85.

The protein localises to the nucleus. In terms of biological role, involved in exit from mitosis and pseudohyphal differentiation. This chain is Probable transcription factor HMS1 (HMS1), found in Saccharomyces cerevisiae (strain ATCC 204508 / S288c) (Baker's yeast).